The following is a 101-amino-acid chain: NAD(P)H-quinone oxidoreductase subunit 4L, chloroplastic (101 aa).

Helical transmembrane passes span 2–22 (MLEH…YGLI), 32–52 (MCLE…SDFF), and 61–81 (IFSI…LAIV).

Belongs to the complex I subunit 4L family. NDH is composed of at least 16 different subunits, 5 of which are encoded in the nucleus.

It is found in the plastid. The protein localises to the chloroplast thylakoid membrane. It carries out the reaction a plastoquinone + NADH + (n+1) H(+)(in) = a plastoquinol + NAD(+) + n H(+)(out). The catalysed reaction is a plastoquinone + NADPH + (n+1) H(+)(in) = a plastoquinol + NADP(+) + n H(+)(out). In terms of biological role, NDH shuttles electrons from NAD(P)H:plastoquinone, via FMN and iron-sulfur (Fe-S) centers, to quinones in the photosynthetic chain and possibly in a chloroplast respiratory chain. The immediate electron acceptor for the enzyme in this species is believed to be plastoquinone. Couples the redox reaction to proton translocation, and thus conserves the redox energy in a proton gradient. The chain is NAD(P)H-quinone oxidoreductase subunit 4L, chloroplastic from Guizotia abyssinica (Niger).